The sequence spans 291 residues: N-acetylmannosamine kinase (291 aa).

ATP-binding positions include 5–12 and 132–139; these read AIDIGGTK and GVGGGVVS. 4 residues coordinate Zn(2+): histidine 156, cysteine 166, cysteine 168, and cysteine 173.

It belongs to the ROK (NagC/XylR) family. NanK subfamily. Homodimer.

It catalyses the reaction an N-acyl-D-mannosamine + ATP = an N-acyl-D-mannosamine 6-phosphate + ADP + H(+). It participates in amino-sugar metabolism; N-acetylneuraminate degradation; D-fructose 6-phosphate from N-acetylneuraminate: step 2/5. Functionally, catalyzes the phosphorylation of N-acetylmannosamine (ManNAc) to ManNAc-6-P. This is N-acetylmannosamine kinase from Escherichia coli O7:K1 (strain IAI39 / ExPEC).